The chain runs to 330 residues: uncharacterized protein (330 aa).

It belongs to the ornithine cyclodeaminase/mu-crystallin family.

It localises to the cytoplasm. This is an uncharacterized protein from Schizosaccharomyces pombe (strain 972 / ATCC 24843) (Fission yeast).